Here is a 174-residue protein sequence, read N- to C-terminus: Shikimate kinase 2 (174 aa).

Position 12 to 17 (12 to 17 (GAGKTT)) interacts with ATP. Mg(2+) contacts are provided by T16 and D32. The substrate site is built by D34, R58, and G79. The tract at residues 112–126 (AEDPEDAQRPSLTGK) is LID domain. Residue R120 coordinates ATP. R139 is a substrate binding site. Residue Q155 participates in ATP binding.

The protein belongs to the shikimate kinase family. AroL subfamily. In terms of assembly, monomer. The cofactor is Mg(2+).

It is found in the cytoplasm. It catalyses the reaction shikimate + ATP = 3-phosphoshikimate + ADP + H(+). It participates in metabolic intermediate biosynthesis; chorismate biosynthesis; chorismate from D-erythrose 4-phosphate and phosphoenolpyruvate: step 5/7. In terms of biological role, catalyzes the specific phosphorylation of the 3-hydroxyl group of shikimic acid using ATP as a cosubstrate. The protein is Shikimate kinase 2 of Yersinia enterocolitica serotype O:8 / biotype 1B (strain NCTC 13174 / 8081).